Reading from the N-terminus, the 216-residue chain is MTRNDLLDRLATTQASALETQGLGLVPMVVEQSGRGERAYDIYSRLLKERVVFMVGEVNDQTANLVVAQLLFLESENPDKDVSLYINSPGGSVSAGLAIYDTMQFIKPDVQTLCMGMAASMGAFLLAAGAKGKRSALPNSRIMIHQPLGGARGQASDIEIQAREILYLRERLNSILSEVTGQPVEKIARDTDRDNFMSGDQAVDYGLIDKVITRRS.

The active-site Nucleophile is the S120. Residue H145 is part of the active site.

The protein belongs to the peptidase S14 family. In terms of assembly, fourteen ClpP subunits assemble into 2 heptameric rings which stack back to back to give a disk-like structure with a central cavity, resembling the structure of eukaryotic proteasomes.

It is found in the cytoplasm. The enzyme catalyses Hydrolysis of proteins to small peptides in the presence of ATP and magnesium. alpha-casein is the usual test substrate. In the absence of ATP, only oligopeptides shorter than five residues are hydrolyzed (such as succinyl-Leu-Tyr-|-NHMec, and Leu-Tyr-Leu-|-Tyr-Trp, in which cleavage of the -Tyr-|-Leu- and -Tyr-|-Trp bonds also occurs).. Cleaves peptides in various proteins in a process that requires ATP hydrolysis. Has a chymotrypsin-like activity. Plays a major role in the degradation of misfolded proteins. In Cupriavidus metallidurans (strain ATCC 43123 / DSM 2839 / NBRC 102507 / CH34) (Ralstonia metallidurans), this protein is ATP-dependent Clp protease proteolytic subunit.